The following is a 64-amino-acid chain: Large ribosomal subunit protein bL35 (64 aa).

A disordered region spans residues 1-25; it reads MPKMKTHRGAAKRLKKTGTGKLKRA.

Belongs to the bacterial ribosomal protein bL35 family.

This chain is Large ribosomal subunit protein bL35, found in Clostridioides difficile (strain 630) (Peptoclostridium difficile).